The following is a 276-amino-acid chain: Transmembrane protein 45B (276 aa).

The next 6 helical transmembrane spans lie at 7–27, 48–68, 95–115, 147–167, 181–201, and 213–233; these read HALP…KYPL, IIEA…EQFV, LFFA…HVPL, IHSL…VEVV, LLLL…PPFG, and IMFV…ILAA. Residues serine 271 and serine 273 each carry the phosphoserine modification.

Belongs to the TMEM45 family.

Its subcellular location is the endosome membrane. It localises to the lysosome membrane. The protein localises to the golgi apparatus. It is found in the trans-Golgi network membrane. In terms of biological role, plays a role in innate immunity. The chain is Transmembrane protein 45B (TMEM45B) from Bos taurus (Bovine).